The sequence spans 199 residues: Recombination protein RecR (199 aa).

The segment at 57–72 (CSICGNITESDPCEIC) adopts a C4-type zinc-finger fold. In terms of domain architecture, Toprim spans 80–176 (STIMVVEQPK…KVTRLAAGLA (97 aa)).

This sequence belongs to the RecR family.

Its function is as follows. May play a role in DNA repair. It seems to be involved in an RecBC-independent recombinational process of DNA repair. It may act with RecF and RecO. The sequence is that of Recombination protein RecR from Lactobacillus johnsonii (strain CNCM I-12250 / La1 / NCC 533).